The primary structure comprises 390 residues: Galactokinase (390 aa).

E33–D36 contacts substrate. Residues S67 and G124–S130 contribute to the ATP site. 2 residues coordinate Mg(2+): S130 and E162. The Proton acceptor role is filled by D174. Y224 contributes to the substrate binding site.

Belongs to the GHMP kinase family. GalK subfamily.

Its subcellular location is the cytoplasm. The catalysed reaction is alpha-D-galactose + ATP = alpha-D-galactose 1-phosphate + ADP + H(+). Its pathway is carbohydrate metabolism; galactose metabolism. Functionally, catalyzes the transfer of the gamma-phosphate of ATP to D-galactose to form alpha-D-galactose-1-phosphate (Gal-1-P). The polypeptide is Galactokinase (Streptococcus mutans serotype c (strain ATCC 700610 / UA159)).